Reading from the N-terminus, the 1828-residue chain is AT-rich interactive domain-containing protein 2 (1828 aa).

Position 2 is an N-acetylalanine (Ala-2). Ser-4 is modified (phosphoserine). Glycyl lysine isopeptide (Lys-Gly) (interchain with G-Cter in SUMO2) cross-links involve residues Lys-7, Lys-15, and Lys-119. One can recognise an ARID domain in the interval 13 to 105 (RRKGLAFLDE…YLEKYEKVHH (93 aa)). The short motif at 313 to 317 (LRFLL) is the LXXLL element. Positions 524–603 (ACQWLNAHFE…IHVIGVKRRA (80 aa)) form a DNA-binding region, RFX-type winged-helix. A Glycyl lysine isopeptide (Lys-Gly) (interchain with G-Cter in SUMO2) cross-link involves residue Lys-555. 2 positions are modified to phosphoserine: Ser-631 and Ser-635. The residue at position 653 (Thr-653) is a Phosphothreonine. Ser-689 is subject to Phosphoserine. Thr-692 is modified (phosphothreonine). Disordered regions lie at residues 824–843 (TSPQ…SQPQ), 962–1028 (LTGQ…QVQV), 1245–1339 (KEAT…EPVD), 1360–1462 (KGDG…RPSV), 1483–1503 (HSGP…TNGT), and 1566–1618 (SAAQ…HADP). Polar residues predominate over residues 987-1011 (AMSSSSTLQSQGPPPTVSQMLSVKR). Over residues 1012–1028 (QQQQQHSPAAPAQQVQV) the composition is skewed to low complexity. The segment covering 1245–1259 (KEATGLHVHERKIEV) has biased composition (basic and acidic residues). The segment covering 1267–1283 (RGTTNTSNGDTSESELQ) has biased composition (polar residues). Ser-1294 carries the post-translational modification Phosphoserine. Polar residues-rich tracts occupy residues 1295–1320 (DSSL…SNGP) and 1366–1379 (LSKN…SNHV). At Ser-1385 the chain carries Phosphoserine. Polar residues-rich tracts occupy residues 1390–1400 (QGTSGATQQDT) and 1419–1428 (GSPSTSSMQE). Residues 1453–1462 (SDVPQQRPSV) are compositionally biased toward low complexity. Ser-1491 carries the post-translational modification Phosphoserine. Composition is skewed to polar residues over residues 1491–1503 (SALS…TNGT) and 1567–1586 (AAQQ…APQN). Low complexity predominate over residues 1594-1614 (AVQVQGQPSSSQPSPVSASSQ). Residues 1626–1651 (FMCLWQSCKKWFQTPSQVFYHAATEH) form a C2H2-type zinc finger. Residues Lys-1695, Lys-1710, and Lys-1725 each participate in a glycyl lysine isopeptide (Lys-Gly) (interchain with G-Cter in SUMO2) cross-link. Positions 1697 to 1726 (DEPGQVANQKSSTKQPTVGGTGSAPRAQKA) are disordered. Polar residues predominate over residues 1702 to 1714 (VANQKSSTKQPTV).

It belongs to the RFX family. Component of the SWI/SNF-B (PBAF) chromatin remodeling complex, at least composed of SMARCA4/BRG1, SMARCB1/BAF47/SNF5, ACTL6A/BAF53A or ACTL6B/BAF53B, SMARCE1/BAF57, SMARCD1/BAF60A, SMARCD2/BAF60B, perhaps SMARCD3/BAF60C, SMARCC1/BAF155, SMARCC2/BAF170, PBRM1/BAF180, ARID2/BAF200 and actin. Interacts with SRF. Forms complexes with SRF and SRF cofactors MYOCD, NKX2-5 and SRFBP1. As to expression, highly expressed in testis, expressed in heart, liver and kidney.

It localises to the nucleus. Involved in transcriptional activation and repression of select genes by chromatin remodeling (alteration of DNA-nucleosome topology). Required for the stability of the SWI/SNF chromatin remodeling complex SWI/SNF-B (PBAF). May be involved in targeting the complex to different genes. May be involved in regulating transcriptional activation of cardiac genes. This chain is AT-rich interactive domain-containing protein 2, found in Mus musculus (Mouse).